We begin with the raw amino-acid sequence, 320 residues long: ATP-dependent 6-phosphofructokinase (320 aa).

G12 is a binding site for ATP. R22–R26 is a binding site for ADP. ATP contacts are provided by residues R73–F74 and G103–S106. D104 is a binding site for Mg(2+). Position 126-128 (T126–D128) interacts with substrate. Residue D128 is the Proton acceptor of the active site. R155 contacts ADP. Residues R163 and M170–R172 each bind substrate. ADP is bound by residues G186–E188, K212, and K214–H216. Residues E223, R244, and H250–R253 contribute to the substrate site.

It belongs to the phosphofructokinase type A (PFKA) family. ATP-dependent PFK group I subfamily. Prokaryotic clade 'B1' sub-subfamily. Homotetramer. The cofactor is Mg(2+).

It localises to the cytoplasm. It catalyses the reaction beta-D-fructose 6-phosphate + ATP = beta-D-fructose 1,6-bisphosphate + ADP + H(+). Its pathway is carbohydrate degradation; glycolysis; D-glyceraldehyde 3-phosphate and glycerone phosphate from D-glucose: step 3/4. Allosterically activated by ADP and other diphosphonucleosides, and allosterically inhibited by phosphoenolpyruvate. Catalyzes the phosphorylation of D-fructose 6-phosphate to fructose 1,6-bisphosphate by ATP, the first committing step of glycolysis. This Vibrio cholerae serotype O1 (strain ATCC 39315 / El Tor Inaba N16961) protein is ATP-dependent 6-phosphofructokinase.